Reading from the N-terminus, the 306-residue chain is Serine/threonine-protein phosphatase PP2A-2 catalytic subunit (306 aa).

Mn(2+) is bound by residues aspartate 54, histidine 56, aspartate 82, and asparagine 114. The active-site Proton donor is the histidine 115. Mn(2+) is bound by residues histidine 164 and histidine 238. Leucine 306 is modified (leucine methyl ester).

This sequence belongs to the PPP phosphatase family. PP-2A subfamily. As to quaternary structure, PP2A consists of a common heterodimeric core enzyme, composed of a 36 kDa catalytic subunit (subunit C) and a 65 kDa constant regulatory subunit (subunit A), that associates with a variety of regulatory subunits such as subunits B (the R2/B/PR55/B55, R3/B''/PR72/PR130/PR59 and R5/B'/B56 families). Interacts with B'THETA. Interacts with HDA14. Interacts with SRK2E/OST1. Interacts with TAP46. Mn(2+) serves as cofactor. Reversibly methyl esterified on Leu-306 by leucine carboxyl methyltransferase 1 (LCMT1) and pectin methylesterase 1 (PME1). Carboxyl methylation influences the affinity of the catalytic subunit for the different regulatory subunits, thereby modulating the PP2A holoenzyme's substrate specificity, enzyme activity and cellular localization. Post-translationally, phosphorylation of either threonine (by autophosphorylation-activated protein kinase) or tyrosine results in inactivation of the phosphatase. Auto-dephosphorylation has been suggested as a mechanism for reactivation. Expressed in root meristem, emerging lateral roots, leaf vasculature, stipules, guard cells, anthers and pollen grains.

The protein resides in the cytoplasm. Its subcellular location is the cytosol. The protein localises to the nucleus. It localises to the peroxisome. The catalysed reaction is O-phospho-L-seryl-[protein] + H2O = L-seryl-[protein] + phosphate. The enzyme catalyses O-phospho-L-threonyl-[protein] + H2O = L-threonyl-[protein] + phosphate. Dephosphorylates and activates the actin-depolymerizing factor ADF1, which, in turn, regulates actin cytoskeleton remodeling and is involved in the blue light photoreceptor PHOT2-mediated chloroplast avoidance movements. Associates with the serine/threonine-protein phosphatase PP2A regulatory subunits A and B' to positively regulates beta-oxidation of fatty acids and protoauxins in peroxisomes by dephosphorylating peroxisomal beta-oxidation-related proteins. Acts as a negative regulator of abscisic acid (ABA) signaling. May regulate ABA-dependent gene expression. Involved in the light-dependent activation of nitrate reductase. In Arabidopsis thaliana (Mouse-ear cress), this protein is Serine/threonine-protein phosphatase PP2A-2 catalytic subunit.